A 277-amino-acid chain; its full sequence is MLLAERVEQSEHDAGWSAHLQLRFVEGGGVTRLGARRHFGPLLVQRPFYPEGAPCHVYVLHPPGGIVAGDRLELDIHLEPGSHALLTMPGASKFYRSIGPTARLTQRFHLQAGSTLEWLPQDSIFFSGARASLDSRFTLEPGARLLAWETLCLGRPVMGERFDQGALDSRLSIELPDDPGLHERLRISGGQLEKLGGHPLLATFCASPADPSVLEKVRHLLDELKTPAGATLLGSLLVIRLLDHDNQHLQHTLQRLWHVLRPAVLGLPACPPRIWAT.

The protein belongs to the UreD family. As to quaternary structure, ureD, UreF and UreG form a complex that acts as a GTP-hydrolysis-dependent molecular chaperone, activating the urease apoprotein by helping to assemble the nickel containing metallocenter of UreC. The UreE protein probably delivers the nickel.

The protein localises to the cytoplasm. Required for maturation of urease via the functional incorporation of the urease nickel metallocenter. The protein is Urease accessory protein UreD of Pseudomonas putida (strain W619).